We begin with the raw amino-acid sequence, 140 residues long: Lymphocyte antigen 6H (140 aa).

A signal peptide spans 1 to 25 (MLPAAMKGLGLVLLAALLCSSPAHG). The UPAR/Ly6 domain occupies 26-91 (LWCQDCTLTT…RHFFSDYLMG (66 aa)). Disulfide bonds link cysteine 28–cysteine 52, cysteine 31–cysteine 40, cysteine 45–cysteine 73, cysteine 77–cysteine 104, and cysteine 105–cysteine 110. An N-linked (GlcNAc...) asparagine glycan is attached at asparagine 36.

The protein localises to the cell membrane. The sequence is that of Lymphocyte antigen 6H (LY6H) from Bos taurus (Bovine).